The chain runs to 225 residues: MAELKSLSGDAYLALSHGYAAAAAGLAYGAAREPEAARGYGTPGPGGDLPAAPAPRAPAQAAESSGEQSGDEDDAFEQRRRRRGPGSAADGRRRPREQRSLRLSINARERRRMHDLNDALDGLRAVIPYAHSPSVRKLSKIATLLLAKNYILMQAQALDEMRRLVAFLNQGQGLAAPVNAAPLTPFGQATVCPFSAGAALGPCPDKCAAFSGTPSALCKHCHEKP.

The tract at residues 35 to 104 (EAARGYGTPG…PREQRSLRLS (70 aa)) is disordered. Positions 100–154 (SLRLSINARERRRMHDLNDALDGLRAVIPYAHSPSVRKLSKIATLLLAKNYILMQ) constitute a bHLH domain.

The protein resides in the nucleus. May function as transcriptional repressor. May modulate the expression of genes required for the differentiation and/or maintenance of pancreatic and neuronal cell types. May be important for rod bipolar cell maturation. This Homo sapiens (Human) protein is Class E basic helix-loop-helix protein 23 (BHLHE23).